The chain runs to 1537 residues: Adhesion G protein-coupled receptor L3 (1537 aa).

A signal peptide spans 1-19 (MWPPQLLILTMLLAPVVHG). Over 20–943 (GKHNERHPAL…VKHSDAVHDL (924 aa)) the chain is Extracellular. Positions 53–80 (PAAERSTAHRGQGPRGAARGVRGPGAPG) are disordered. The SUEL-type lectin domain maps to 103–192 (SCESYPIELR…KYLEVQYECV (90 aa)). 5 disulfide bridges follow: cysteine 104/cysteine 134, cysteine 113/cysteine 191, cysteine 146/cysteine 178, cysteine 159/cysteine 165, and cysteine 203/cysteine 385. A glycan (N-linked (GlcNAc...) asparagine) is linked at asparagine 161. In terms of domain architecture, Olfactomedin-like spans 202–461 (LCPGLLKGVY…VVKYSLDFGP (260 aa)). The segment at 317–347 (YHDTSPYRWGGKSDIDLAVDENGLWVIYATE) is interaction with FLRT3. Residues aspartate 332, asparagine 380, alanine 381, and valine 435 each contribute to the Ca(2+) site. Positions 521 to 540 (RSTTASLPGRRNRSTSTPSP) are disordered. N-linked (GlcNAc...) asparagine glycans are attached at residues asparagine 532, asparagine 617, asparagine 827, asparagine 840, asparagine 885, and asparagine 911. One can recognise a GAIN-B domain in the interval 756–935 (DIVRENTDNI…AVLMAHVEVK (180 aa)). Cystine bridges form between cysteine 886-cysteine 917 and cysteine 905-cysteine 919. The interval 886–935 (CSFWSYSKRTMTGYWSTQGCRLLTTNKTHTTCSCNHLTNFAVLMAHVEVK) is GPS. The stachel stretch occupies residues 923–939 (TNFAVLMAHVEVKHSDA). A helical transmembrane segment spans residues 944–969 (LLDVITWVGILLSLVCLLICIFTFCF). Residues 970-975 (FRGLQS) lie on the Cytoplasmic side of the membrane. Residues 976–999 (DRNTIHKNLCISLFVAELLFLIGI) traverse the membrane as a helical segment. Residue asparagine 1000 is glycosylated (N-linked (GlcNAc...) asparagine). The Extracellular segment spans residues 1000 to 1006 (NRTDQPI). A helical transmembrane segment spans residues 1007 to 1034 (ACAVFAALLHFFFLAAFTWMFLEGVQLY). Residues cysteine 1008 and cysteine 1080 are joined by a disulfide bond. Residues 1035-1048 (IMLVEVFESEHSRR) lie on the Cytoplasmic side of the membrane. The chain crosses the membrane as a helical span at residues 1049-1071 (KYFYLVGYGMPALIVAVSAAVDY). Over 1072 to 1086 (RSYGTDKVCWLRLDT) the chain is Extracellular. A helical membrane pass occupies residues 1087–1112 (YFIWSFIGPATLIIMLNVIFLGIALY). Over 1113-1142 (KMFHHTAILKPESGCLDNINYEDNRPFIKS) the chain is Cytoplasmic. Residues 1143-1163 (WVIGAIALLCLLGLTWAFGLM) form a helical membrane-spanning segment. Topologically, residues 1164–1168 (YINES) are extracellular. Asparagine 1166 carries N-linked (GlcNAc...) asparagine glycosylation. The helical transmembrane segment at 1169 to 1195 (TVIMAYLFTIFNSLQGMFIFIFHCVLQ) threads the bilayer. The Cytoplasmic portion of the chain corresponds to 1196 to 1537 (KKVRKEYGKC…KGPAHLVTSL (342 aa)). The disordered stretch occupies residues 1213–1237 (GKSTESSIGSGKTSGSRTPGRYSTG). Residues serine 1254 and serine 1522 each carry the phosphoserine modification. The interval 1512-1537 (FIVPPNKDGASPEGTSKGPAHLVTSL) is disordered. A PDZ-binding motif is present at residues 1532–1537 (HLVTSL).

This sequence belongs to the G-protein coupled receptor 2 family. LN-TM7 subfamily. Heterodimer of 2 chains generated by proteolytic processing; the large extracellular N-terminal fragment and the membrane-bound C-terminal fragment predominantly remain associated and non-covalently linked. Interacts (via olfactomedin-like domain) with FLRT1 (via extracellular domain). Interacts (via olfactomedin-like domain) with FLRT2 (via extracellular domain). Interacts (via olfactomedin-like domain) with FLRT3 (via extracellular domain); the interaction is direct. Interacts (via extracellular domain) with TENM1. Interacts (via extracellular domain) with TENM2. Interacts (via extracellular domain) with TENM3. Identified in a complex with FLRT3 and UNC5B; does not interact with UNC5B by itself. Identified in a complex with FLRT3 and UNC5D; does not interact with UNC5D by itself. As to quaternary structure, interacts (via PDZ-binding motif) with SHANK3. Interacts (via PDZ-binding motif) with DLG4. Autoproteolytically processed at the GPS region of the GAIN-B domain; this cleavage modulates receptor activity. Post-translationally, O-glycosylated (major) and N-glycosylated. Localizes to postsynaptic spines in non-overlapping dendritic domains of CA1-region pyramidal neurons: specifically localizes to excitatory synapses in the S.oriens and S.radiatum, corresponding to distinct presynaptic inputs onto CA1-region pyramidal neurons.

It localises to the cell membrane. Its subcellular location is the postsynaptic cell membrane. It is found in the cell projection. The protein localises to the axon. The protein resides in the cell junction. Forms a heterodimer of 2 chains generated by proteolytic processing that remain associated through non-covalent interactions mediated by the GAIN-B domain. In the inactivated receptor, the Stachel sequence (also named stalk) is embedded in the GAIN-B domain, where it adopts a beta-strand conformation. On activation, the Stachel moves into the 7 transmembrane region and adopts a twisted hook-shaped configuration that forms contacts within the receptor, leading to coupling of a G-alpha protein, which activates signaling. The cleaved GAIN-B and N-terminal domains can then dissociate from the rest of the receptor. Its function is as follows. Orphan adhesion G-protein coupled receptor (aGPCR), which mediates synapse specificity. Ligand binding causes a conformation change that triggers signaling via guanine nucleotide-binding proteins (G proteins) and modulates the activity of downstream effectors. ADGRL3 is coupled with different classes of G alpha proteins, such as G(12)/G(13), G(s), G(i) or G(q), depending on the context. Coupling to G(12)/G(13) G proteins, which mediates the activation Rho small GTPases is the most efficient. Following G-protein coupled receptor activation, associates with cell adhesion molecules that are expressed at the surface of adjacent cells to direct synapse specificity. Specifically mediates the establishment of Schaffer-collateral synapses formed by CA3-region axons on CA1-region pyramidal neurons in the hippocampus. Localizes to postsynaptic spines in excitatory synapses in the S.oriens and S.radiatum and interacts with presynaptic cell adhesion molecules FLRT3 and TENM2, promoting synapse formation. Plays a role in the development of glutamatergic synapses in the cortex. Important in determining the connectivity rates between the principal neurons in the cortex. In terms of biological role, orphan adhesion G-protein coupled receptor (aGPCR), which mediates synapse specificity. Ligand binding causes a conformation change that triggers signaling via guanine nucleotide-binding proteins (G proteins) and modulates the activity of downstream effectors, such as adenylate cyclase. Isoform 1 is specifically coupled to G(s) G proteins and mediates activation of adenylate cyclase activity. Following G-protein coupled receptor activation, undergoes liquid-liquid phase transition, associates with (1) cell adhesion molecules that are expressed at the surface of adjacent cells, as well as (2) PDZ-containing proteins, such as SHANK3 and DLG4, in the cytoplasm to direct synapse formation. Orphan adhesion G-protein coupled receptor (aGPCR). Ligand binding causes a conformation change that triggers signaling via guanine nucleotide-binding proteins (G proteins) and modulates the activity of downstream effectors, such as RhoA pathway. Isoform 7 is coupled to G(12) and/or G(13) G proteins (GNA12 and GNA13, respectively) and mediates the activation Rho small GTPases. This Mus musculus (Mouse) protein is Adhesion G protein-coupled receptor L3.